The sequence spans 297 residues: MNIAIRNPVPIRREEGSLQVALDPADRIETAKVFAVYGKGGIGKSTTSSNLSVAFSKLGKRVLQIGCDPKHDSTFTLTKRLAPTVIDALESVNFHSEELRPEDFVVEGFNGVKCVEAGGPPAGTGCGGYVVGQTVKLLKEHHLLEDTDVVVFDVLGDVVCGGFASPLQHADRALIVTANDFDSIFAMNRIVAAIHSKSKNYGVRLGGVIANRSAKTDEIDRFNAAVGLRRLAHFPDLDVVRRSRLKKSTLFEMEPSPELKAVTDEYMQLAETLWAGADPCEAVPMKDRDLFEFLGFD.

ATP-binding positions include 41 to 46 (GIGKST) and Lys-70. Ser-45 contacts Mg(2+). [4Fe-4S] cluster contacts are provided by Cys-126 and Cys-160. ATP contacts are provided by residues 211–212 (NR) and 235–237 (PDL).

The protein belongs to the NifH/BchL/ChlL family. Homodimer. Protochlorophyllide reductase is composed of three subunits; BchL, BchN and BchB. [4Fe-4S] cluster serves as cofactor.

The enzyme catalyses chlorophyllide a + oxidized 2[4Fe-4S]-[ferredoxin] + 2 ADP + 2 phosphate = protochlorophyllide a + reduced 2[4Fe-4S]-[ferredoxin] + 2 ATP + 2 H2O. Its pathway is porphyrin-containing compound metabolism; bacteriochlorophyll biosynthesis (light-independent). Component of the dark-operative protochlorophyllide reductase (DPOR) that uses Mg-ATP and reduced ferredoxin to reduce ring D of protochlorophyllide (Pchlide) to form chlorophyllide a (Chlide). This reaction is light-independent. The L component serves as a unique electron donor to the NB-component of the complex, and binds Mg-ATP. This Methylorubrum populi (strain ATCC BAA-705 / NCIMB 13946 / BJ001) (Methylobacterium populi) protein is Light-independent protochlorophyllide reductase iron-sulfur ATP-binding protein.